The sequence spans 208 residues: LexA repressor (208 aa).

The H-T-H motif DNA-binding region spans 28–48 (VREIGEAVGLASSSTVHGHLA). Catalysis depends on for autocatalytic cleavage activity residues Ser130 and Lys168.

Belongs to the peptidase S24 family. Homodimer.

The enzyme catalyses Hydrolysis of Ala-|-Gly bond in repressor LexA.. Represses a number of genes involved in the response to DNA damage (SOS response), including recA and lexA. In the presence of single-stranded DNA, RecA interacts with LexA causing an autocatalytic cleavage which disrupts the DNA-binding part of LexA, leading to derepression of the SOS regulon and eventually DNA repair. This is LexA repressor from Shouchella clausii (strain KSM-K16) (Alkalihalobacillus clausii).